The sequence spans 366 residues: Growth hormone secretagogue receptor type 1 (366 aa).

Topologically, residues 1-40 are extracellular; sequence MWNATPSEEPGSNLTRAELGWDAPPGNDSLADELLQLFPA. N-linked (GlcNAc...) asparagine glycans are attached at residues asparagine 13 and asparagine 27. A helical transmembrane segment spans residues 41–66; the sequence is PLLAGVTATCVALFVVGIAGNLLTML. Topologically, residues 67–72 are cytoplasmic; that stretch reads VVSRFR. Residues 73-96 form a helical membrane-spanning segment; that stretch reads ELRTTTNLYLSSMAFSDLLIFLCM. At 97–117 the chain is on the extracellular side; that stretch reads PLDLVRLWQYRPWNFGDLLCK. The cysteines at positions 116 and 198 are disulfide-linked. The chain crosses the membrane as a helical span at residues 118 to 139; that stretch reads LFQFVSESCTYATVLTITALSV. At 140-162 the chain is on the cytoplasmic side; it reads ERYFAICFPLRAKVVVTKGRVKL. Residues 163–183 form a helical membrane-spanning segment; it reads VILVIWALAFCSAGPIFVLVG. The Extracellular segment spans residues 184–211; it reads VEHENGTDPQDTNECRATEFAVRSGLLT. A glycan (N-linked (GlcNAc...) asparagine) is linked at asparagine 188. Residues 212–235 form a helical membrane-spanning segment; the sequence is IMVWVSSVFFFLPVFCLTVLYSLI. Residues 236 to 263 lie on the Cytoplasmic side of the membrane; it reads GRKLWRRKRGDGAVGSSLRDQNHRQTVK. A helical membrane pass occupies residues 264–285; that stretch reads MLAVVVFAFILCWLPFHVGRYL. Topologically, residues 286–302 are extracellular; the sequence is FSKSFEPGSLEIAQISQ. The helical transmembrane segment at 303 to 326 threads the bilayer; that stretch reads YCNLVSFVLFYLSAAINPILYNIM. Over 327–366 the chain is Cytoplasmic; sequence SKKYRVAVFKLLGFEPFSQRKLSTLKDESSRAWTKSSINT.

Belongs to the G-protein coupled receptor 1 family.

It localises to the cell membrane. In terms of biological role, receptor for ghrelin, coupled to G-alpha-11 proteins. Stimulates growth hormone secretion. Also binds other growth hormone releasing peptides (GHRP) (e.g. Met-enkephalin and GHRP-6) as well as non-peptide, low molecular weight secretagogues (e.g. L-692,429, MK-0677, adenosine). The polypeptide is Growth hormone secretagogue receptor type 1 (GHSR) (Oryctolagus cuniculus (Rabbit)).